A 130-amino-acid chain; its full sequence is uncharacterized protein (130 aa).

Transmembrane regions (helical) follow at residues 34–54, 73–93, and 107–127; these read AILI…FAFF, LLLT…GWLA, and FGTG…IVWI.

It is found in the cell membrane. This is an uncharacterized protein from Mycoplasma pneumoniae (strain ATCC 29342 / M129 / Subtype 1) (Mycoplasmoides pneumoniae).